Reading from the N-terminus, the 147-residue chain is Calcium-regulated heat stable protein 1 (147 aa).

The segment covering 1–12 (MSSEPPPPPQPP) has biased composition (pro residues). Positions 1-49 (MSSEPPPPPQPPTHQTSIGLLDTPRARDRSPSPLRGNVVPSPLPTRRTR) are disordered. N-acetylserine is present on S2. A phosphoserine mark is found at S30, S32, and S41. T45 is subject to Phosphothreonine. Residues S52 and S58 each carry the phosphoserine modification. The 68-residue stretch at 62–129 (VYKGVCKCFC…KLQAVEVVIT (68 aa)) folds into the CSD domain. A phosphoserine mark is found at S146 and S147.

In terms of assembly, homodimer. Interacts with STYX. Post-translationally, can be phosphorylated by DYRK2 (in vitro). Dephosphorylated by calcineurin in a Ca(2+) dependent manner, and probably by PP2A or PP4 serine phosphatases in cAMP- and PKC-mediated pathways. In terms of tissue distribution, widely expressed.

It localises to the cytoplasm. The protein localises to the P-body. The protein resides in the cytoplasmic granule. Functionally, binds mRNA and regulates the stability of target mRNA. This chain is Calcium-regulated heat stable protein 1 (Carhsp1), found in Rattus norvegicus (Rat).